The primary structure comprises 299 residues: Putative ankyrin repeat protein R864 (299 aa).

ANK repeat units follow at residues 78–107 (SLNK…NIES), 108–137 (NNNY…NIKS), 139–167 (NNRV…DIRS), 168–197 (NDDY…DIRS), 199–227 (YYYI…DIRA), 228–257 (YNNC…DIRN), and 258–287 (DNDY…DIKT).

In Acanthamoeba polyphaga mimivirus (APMV), this protein is Putative ankyrin repeat protein R864.